A 180-amino-acid chain; its full sequence is Orotate phosphoribosyltransferase (180 aa).

5-phospho-alpha-D-ribose 1-diphosphate contacts are provided by residues arginine 95, lysine 96, lysine 99, and glutamate 121 to serine 129. 2 residues coordinate orotate: threonine 125 and arginine 153.

Belongs to the purine/pyrimidine phosphoribosyltransferase family. PyrE subfamily. As to quaternary structure, homodimer. It depends on Mg(2+) as a cofactor.

The enzyme catalyses orotidine 5'-phosphate + diphosphate = orotate + 5-phospho-alpha-D-ribose 1-diphosphate. It functions in the pathway pyrimidine metabolism; UMP biosynthesis via de novo pathway; UMP from orotate: step 1/2. Functionally, catalyzes the transfer of a ribosyl phosphate group from 5-phosphoribose 1-diphosphate to orotate, leading to the formation of orotidine monophosphate (OMP). The polypeptide is Orotate phosphoribosyltransferase (Methanothermobacter thermautotrophicus (strain ATCC 29096 / DSM 1053 / JCM 10044 / NBRC 100330 / Delta H) (Methanobacterium thermoautotrophicum)).